Reading from the N-terminus, the 284-residue chain is MSAQLINGKEVSQKRLQAVAEAVAQRQQNNLHHPCLAVVLVGGDPASAVYVRNKKTACQKCGIKSLSYELPESTSQEELLALVDRLNADSEVDGILVQLPLPKHLDSQAVLERISPDKDVDGFHPYNVGRLAVKMPLMRPCTPKGVMTLLEAYGIDPKGKKAVVVGASNIVGRPQALELLLARATVTVCHSATENLTDEVAGADILVVGVGIPNFVKGEWIKPGAVVIDVGINRLDDGSLCGDVEFETAKERAAMITPVPGGVGPMTIATLMENTLHAASLHDA.

Residues 166–168 (GAS), serine 191, and isoleucine 232 contribute to the NADP(+) site.

It belongs to the tetrahydrofolate dehydrogenase/cyclohydrolase family. As to quaternary structure, homodimer.

The catalysed reaction is (6R)-5,10-methylene-5,6,7,8-tetrahydrofolate + NADP(+) = (6R)-5,10-methenyltetrahydrofolate + NADPH. It catalyses the reaction (6R)-5,10-methenyltetrahydrofolate + H2O = (6R)-10-formyltetrahydrofolate + H(+). It participates in one-carbon metabolism; tetrahydrofolate interconversion. Its function is as follows. Catalyzes the oxidation of 5,10-methylenetetrahydrofolate to 5,10-methenyltetrahydrofolate and then the hydrolysis of 5,10-methenyltetrahydrofolate to 10-formyltetrahydrofolate. In Neisseria meningitidis serogroup B (strain ATCC BAA-335 / MC58), this protein is Bifunctional protein FolD.